The primary structure comprises 237 residues: Cysteine-rich venom protein tigrin (237 aa).

The N-terminal stretch at 1–18 (MIVFILLSLAAVLRQSFG) is a signal peptide. In terms of domain architecture, SCP spans 37 to 165 (VNIHNSFRRS…LYNYFYVCQY (129 aa)). Disulfide bonds link C74–C152, C91–C166, C147–C163, C185–C192, C188–C197, C201–C232, C210–C226, and C217–C230. The ShKT domain maps to 201-232 (CTHKDDYNNCNSLVSDCQSDWDKSHCPATCFC).

This sequence belongs to the CRISP family. Expressed by the venom gland.

Its subcellular location is the secreted. Its function is as follows. This protein does not inhibit smooth muscle contraction elicited by high potassium levels or caffeine. The polypeptide is Cysteine-rich venom protein tigrin (Rhabdophis tigrinus tigrinus (Tiger keelback snake)).